We begin with the raw amino-acid sequence, 444 residues long: Baeyer-Villiger oxidase ptaJ (444 aa).

The protein belongs to the questin oxidase family. The cofactor is NADPH.

It functions in the pathway secondary metabolite biosynthesis. Functionally, baeyer-Villiger oxidase; part of the gene cluster that mediates the biosynthesis of pestheic acid, a diphenyl ether which is a biosynthetic precursor of the unique chloropupukeananes. The biosynthesis initiates from condensation of acetate and malonate units catalyzed by the non-reducing PKS ptaA. As the ptaA protein is TE/CLC domain-deficient, hydrolysis and Claisen cyclization of the polyketide could be catalyzed by ptaB containing a beta-lactamase domain. The ptaB protein might hydrolyze the thioester bond between the ACP of ptaA and the intermediate to release atrochrysone carboxylic acid, which is spontaneously dehydrated to form endocrocin anthrone. Endocrocin anthrone is then converted to endocrocin, catalyzed by the anthrone oxygenase ptaC. Spontaneous decarboxylation of endocrocin occurs to generate emodin. An O-methyltransferase (ptaH or ptaI) could methylate emodin to form physcion. PtaJ could then catalyze the oxidative cleavage of physcion, and rotation of the intermediate could then afford desmethylisosulochrin. PtaF, a putative NADH-dependent oxidoreductase, might also participate in the oxidative cleavage step. Desmethylisosulochrin is then transformed by another O-methyltransferase (ptaH or ptaI) to form isosulochrin. Chlorination of isosulochrin by ptaM in the cyclohexadienone B ring then produces chloroisosulochrin. PtaE is responsible for the oxidative coupling reactions of both benzophenones isosulouchrin and chloroisosulouchrin to RES-1214-1 and pestheic acid respectively, regardless of chlorination. This is Baeyer-Villiger oxidase ptaJ from Pestalotiopsis fici (strain W106-1 / CGMCC3.15140).